A 574-amino-acid polypeptide reads, in one-letter code: Glycine--tRNA ligase (574 aa).

Substrate is bound by residues Arg96 and Glu162. ATP is bound by residues 194-196 (RNE), 204-209 (IRLREF), 327-328 (EC), and 450-453 (GIDR). 209–213 (FTQAE) is a substrate binding site. Position 446 to 450 (446 to 450 (EPSYG)) interacts with substrate.

Belongs to the class-II aminoacyl-tRNA synthetase family.

The protein localises to the cytoplasm. It carries out the reaction tRNA(Gly) + glycine + ATP = glycyl-tRNA(Gly) + AMP + diphosphate. Its function is as follows. Catalyzes the attachment of glycine to tRNA(Gly). This is Glycine--tRNA ligase from Methanococcus vannielii (strain ATCC 35089 / DSM 1224 / JCM 13029 / OCM 148 / SB).